The chain runs to 209 residues: MSRVYVFDHPLIQHKVTYIRDKNTGTKEFRELVDEVTTLMGYEITRDMPLEEITIETPVATCQSNVIAGKKVGLVPILRAGLGMVDGLMRLIPAAKVGHVGLYRDPETLQPIEYYVKLPSDVAERELIVTDPMLATGGSAVAALTALKKRGAKNLKLMCLIAAPEGIKLVQDEHPDVDIYVAAVDEYLNDHGYIVPGLGDAGDRLYGTK.

5-phospho-alpha-D-ribose 1-diphosphate contacts are provided by residues arginine 79, arginine 104, and 131–139 (DPMLATGGS). Uracil is bound by residues isoleucine 194 and 199–201 (GDA). Position 200 (aspartate 200) interacts with 5-phospho-alpha-D-ribose 1-diphosphate.

It belongs to the UPRTase family. Mg(2+) is required as a cofactor.

The catalysed reaction is UMP + diphosphate = 5-phospho-alpha-D-ribose 1-diphosphate + uracil. Its pathway is pyrimidine metabolism; UMP biosynthesis via salvage pathway; UMP from uracil: step 1/1. Its activity is regulated as follows. Allosterically activated by GTP. Catalyzes the conversion of uracil and 5-phospho-alpha-D-ribose 1-diphosphate (PRPP) to UMP and diphosphate. This is Uracil phosphoribosyltransferase from Brevibacillus brevis (strain 47 / JCM 6285 / NBRC 100599).